Here is a 429-residue protein sequence, read N- to C-terminus: Enolase (429 aa).

Position 163 (glutamine 163) interacts with (2R)-2-phosphoglycerate. Glutamate 205 functions as the Proton donor in the catalytic mechanism. Aspartate 242, glutamate 287, and aspartate 314 together coordinate Mg(2+). The (2R)-2-phosphoglycerate site is built by lysine 339, arginine 368, serine 369, and lysine 390. The Proton acceptor role is filled by lysine 339.

Belongs to the enolase family. The cofactor is Mg(2+).

The protein resides in the cytoplasm. Its subcellular location is the secreted. The protein localises to the cell surface. It catalyses the reaction (2R)-2-phosphoglycerate = phosphoenolpyruvate + H2O. The protein operates within carbohydrate degradation; glycolysis; pyruvate from D-glyceraldehyde 3-phosphate: step 4/5. In terms of biological role, catalyzes the reversible conversion of 2-phosphoglycerate (2-PG) into phosphoenolpyruvate (PEP). It is essential for the degradation of carbohydrates via glycolysis. The protein is Enolase of Magnetococcus marinus (strain ATCC BAA-1437 / JCM 17883 / MC-1).